The chain runs to 967 residues: A disintegrin and metalloproteinase with thrombospondin motifs 1 (967 aa).

The signal sequence occupies residues 1–54; sequence MQPEVPLGSGKLKPCSDMGDIQRAAKFRSSQSAHMLLLLLASITMLLCVRGAHG. A propeptide spanning residues 55 to 252 is cleaved from the precursor; the sequence is RPTEEDEELV…TGPGSIRKKR (198 aa). The tract at residues 198–252 is disordered; sequence RGSGGAKCGVMDEETLPTSNSGRESQNTPDQWPLRNPTPQGAGKPTGPGSIRKKR. The Cysteine switch signature appears at 203-210; it reads AKCGVMDE. Cys205 serves as a coordination point for Zn(2+). The span at 213-227 shows a compositional bias: polar residues; that stretch reads LPTSNSGRESQNTPD. The Peptidase M12B domain occupies 258-467; it reads RYVETMLVAD…GHGECLMDKP (210 aa). Glu261, Asp344, and Asp351 together coordinate Ca(2+). Cystine bridges form between Cys333/Cys385, Cys362/Cys367, Cys379/Cys462, and Cys417/Cys446. Residue His401 coordinates Zn(2+). Glu402 is a catalytic residue. 2 residues coordinate Zn(2+): His405 and His411. Ca(2+) is bound by residues Cys462 and Asp465. A Disintegrin domain is found at 476–558; the sequence is DLPGTLYDAN…TDMKHFATPV (83 aa). Disulfide bonds link Cys488–Cys511, Cys499–Cys521, Cys506–Cys540, and Cys534–Cys545. N-linked (GlcNAc...) asparagine glycosylation occurs at Asn547. In terms of domain architecture, TSP type-1 1 spans 559-614; the sequence is HGSWGPWGPWGDCSRTCGGGVQYTMRECDNPVPKNGGKYCEGKRVRYRSCNIEDCP. Cystine bridges form between Cys571/Cys608, Cys575/Cys613, and Cys586/Cys598. 3 N-linked (GlcNAc...) asparagine glycosylation sites follow: Asn720, Asn764, and Asn782. A spacer region spans residues 725–857; it reads KKISGTVTST…PFNAIPTFSE (133 aa). 2 TSP type-1 domains span residues 854–910 and 911–967; these read TFSE…LPCP and RWQV…TQCS. Residue Asn945 is glycosylated (N-linked (GlcNAc...) asparagine).

Zn(2+) serves as cofactor. In terms of processing, the precursor is cleaved by a furin endopeptidase. Glycosylated. Can be O-fucosylated by POFUT2 on a serine or a threonine residue found within the consensus sequence C1-X(2)-(S/T)-C2-G of the TSP type-1 repeat domains where C1 and C2 are the first and second cysteine residue of the repeat, respectively. Fucosylated repeats can then be further glycosylated by the addition of a beta-1,3-glucose residue by the glucosyltransferase, B3GALTL. Fucosylation mediates the efficient secretion of ADAMTS family members. Can also be C-glycosylated with one or two mannose molecules on tryptophan residues within the consensus sequence W-X-X-W of the TPRs, and N-glycosylated. These other glycosylations can also facilitate secretion.

It localises to the secreted. It is found in the extracellular space. The protein resides in the extracellular matrix. Metalloprotease which cleaves aggrecan, a cartilage proteoglycan, at the '1683-Glu-|-Leu-1684' site (within the chondroitin sulfate attachment domain), and may be involved in its turnover. Also cleaves COMP. Has angiogenic inhibitor activity. May play a critical role in follicular rupture. In Rattus norvegicus (Rat), this protein is A disintegrin and metalloproteinase with thrombospondin motifs 1 (Adamts1).